The primary structure comprises 258 residues: Trypsin (258 aa).

The signal sequence occupies residues 1 to 16 (MIRFTLALAVIGVTFA). A propeptide spans 17–29 (ASTPQIETNPNLE) (activation peptide). The Peptidase S1 domain occupies 30–257 (IIGGHDANII…FRDWINEETE (228 aa)). The cysteines at positions 55 and 71 are disulfide-linked. His-70 functions as the Charge relay system in the catalytic mechanism. Asn-110 carries an N-linked (GlcNAc...) asparagine glycan. The active-site Charge relay system is the Asp-117. N-linked (GlcNAc...) asparagine glycosylation is found at Asn-130 and Asn-188. 2 cysteine pairs are disulfide-bonded: Cys-182/Cys-197 and Cys-209/Cys-233. Catalysis depends on Ser-213, which acts as the Charge relay system.

Belongs to the peptidase S1 family. In terms of tissue distribution, expressed in larval carcasses and gut, and adult gut.

The protein resides in the secreted. It carries out the reaction Preferential cleavage: Arg-|-Xaa, Lys-|-Xaa.. The sequence is that of Trypsin from Phaedon cochleariae (Mustard beetle).